We begin with the raw amino-acid sequence, 946 residues long: ATP-dependent 6-phosphofructokinase subunit beta (946 aa).

Positions 1-559 (MISIVNGTST…HLANFMAMNT (559 aa)) are N-terminal catalytic PFK domain 1. ATP is bound by residues Gly-192, 256-257 (RC), and 286-289 (GDGS). Asp-287 lines the Mg(2+) pocket. Beta-D-fructose 6-phosphate-binding positions include 332-334 (SID), Arg-369, 376-378 (MGR), Glu-433, Arg-461, and 467-470 (HVQR). Asp-334 acts as the Proton acceptor in catalysis. The tract at residues 560 to 573 (ANHEKPTLPREKRK) is interdomain linker. Residues 574 to 946 (KIAIINIGAP…LVGRTRLDKP (373 aa)) form a C-terminal regulatory PFK domain 2 region. Residues Arg-644, 702 to 706 (TISNN), 747 to 749 (QGG), Lys-833, 839 to 842 (HVQQ), and Arg-920 contribute to the beta-D-fructose 2,6-bisphosphate site.

It belongs to the phosphofructokinase type A (PFKA) family. ATP-dependent PFK group I subfamily. Eukaryotic two domain clade 'E' sub-subfamily. In terms of assembly, heterooctamer of 4 alpha and 4 beta chains. Requires Mg(2+) as cofactor.

The protein resides in the cytoplasm. The catalysed reaction is beta-D-fructose 6-phosphate + ATP = beta-D-fructose 1,6-bisphosphate + ADP + H(+). It participates in carbohydrate degradation; glycolysis; D-glyceraldehyde 3-phosphate and glycerone phosphate from D-glucose: step 3/4. With respect to regulation, allosterically activated by ADP, AMP, or fructose 2,6-bisphosphate, and allosterically inhibited by ATP or citrate. Its function is as follows. Catalyzes the phosphorylation of D-fructose 6-phosphate to fructose 1,6-bisphosphate by ATP, the first committing step of glycolysis. The chain is ATP-dependent 6-phosphofructokinase subunit beta (PFK2) from Candida albicans (Yeast).